The chain runs to 113 residues: U11-theraphotoxin-Hhn1a (113 aa).

The signal sequence occupies residues 1-21 (MNTVRVTFLLVFVLAVSLGQA). A propeptide spanning residues 22-74 (DKDENRMEMQEKAEQGKSYLDFAENLLLQKLEELEAKLLEEDSEESRNSRQKR) is cleaved from the precursor. 3 disulfides stabilise this stretch: Cys-75-Cys-90, Cys-82-Cys-95, and Cys-89-Cys-110.

Belongs to the neurotoxin 14 (magi-1) family. 01 (HNTX-16) subfamily. In terms of tissue distribution, expressed by the venom gland.

The protein resides in the secreted. Functionally, probable ion channel inhibitor. In Cyriopagopus hainanus (Chinese bird spider), this protein is U11-theraphotoxin-Hhn1a.